The chain runs to 783 residues: MKIKTILTPVTCALLISFSAHAANADNYKNVINRTGAPQYMKDYDYDDHQRFNPFFDLGAWHGHLLPDGPNTMGGFPGVALLTEEYINFMASNFDRLTVWQDGKKVDFTLEAYSIPGALVQKLTAKDVQVEMTLRFATPRTSLLETKITSNKPLDLVWDGELLEKLEAKEGKPLSDKTIAGEYPDYQRKISATRDGLKVTFGKVRATWDLLTSGESEYQVHKSLPVQTEINGNRFTSKAHINGSTTLYTTYSHLLTAQEVSKEQMQIRDILARPAFYLTASQQRWEEYLKKGLTNPDATPEQTRVAVKAIETLNGNWRSPGGAVKFNTVTPSVTGRWFSGNQTWPWDTWKQAFAMAHFNPDIAKENIRAVFSWQIQPGDSVRPQDVGFVPDLIAWNLSPERGGDGGNWNERNTKPSLAAWSVMEVYNVTQDKTWVAEMYPKLVAYHDWWLRNRDHNGNGVPEYGATRDKAHNTESGEMLFTVKKGDKEETQSGLNNYARVVEKGQYDSLEIPAQVAASWESGRDDAAVFGFIDKEQLDKYVANGGKRSDWTVKFAENRSQDGTLLGYSLLQESVDQASYMYSDNHYLAEMATILGKPEEAKRYRQLAQQLADYINTCMFDPTTQFYYDVRIEDKPLANGCAGKPIVERGKGPEGWSPLFNGAATQANADAVVKVMLDPKEFNTFVPLGTAALTNPAFGADIYWRGRVWVDQFWFGLKGMERYGYRDDALKLADTFFRHAKGLTADGPIQENYNPLTGAQQGAPNFSWSAAHLYMLYNDFFRKQ.

The N-terminal stretch at 1–22 is a signal peptide; the sequence is MKIKTILTPVTCALLISFSAHA. Positions 24–254 are N-terminal domain; the sequence is NADNYKNVIN…TTLYTTYSHL (231 aa). The segment at 254-299 is linker; that stretch reads LLTAQEVSKEQMQIRDILARPAFYLTASQQRWEEYLKKGLTNPDAT. Positions 300–783 are a domain; that stretch reads PEQTRVAVKA…MLYNDFFRKQ (484 aa). D454, N456, N458, V460, and E462 together coordinate Ca(2+). The Proton donor role is filled by D524. Position 572 (E572) interacts with Ca(2+). E750 serves as the catalytic Proton acceptor.

This sequence belongs to the glycosyl hydrolase 63 family.

Its function is as follows. Glucoside hydrolase that cleaves the alpha-1,3-glucosidic linkage in nigerose. Has very low activity towards maltooligosaccharides, soluble starch, nigerotriose, kojibiose and trehalose. The protein is Glucosidase YgjK (ygjK) of Escherichia coli (strain K12).